A 95-amino-acid chain; its full sequence is uncharacterized protein (95 aa).

A helical transmembrane segment spans residues 27 to 47 (SFGLAIIGILLIACEIILFLT).

The protein localises to the membrane. This is an uncharacterized protein from Homo sapiens (Human).